Reading from the N-terminus, the 175-residue chain is Shikimate kinase (175 aa).

Position 14 to 19 (Gly-14 to Thr-19) interacts with ATP. Residue Ser-18 coordinates Mg(2+). Substrate-binding residues include Asp-36, Arg-60, and Gly-82. Position 120 (Arg-120) interacts with ATP. Arg-140 lines the substrate pocket. Residue Gln-157 coordinates ATP.

Belongs to the shikimate kinase family. In terms of assembly, monomer. Mg(2+) is required as a cofactor.

It localises to the cytoplasm. It carries out the reaction shikimate + ATP = 3-phosphoshikimate + ADP + H(+). The protein operates within metabolic intermediate biosynthesis; chorismate biosynthesis; chorismate from D-erythrose 4-phosphate and phosphoenolpyruvate: step 5/7. Its function is as follows. Catalyzes the specific phosphorylation of the 3-hydroxyl group of shikimic acid using ATP as a cosubstrate. The chain is Shikimate kinase from Histophilus somni (strain 2336) (Haemophilus somnus).